The chain runs to 283 residues: Acetylglutamate kinase (283 aa).

Substrate is bound by residues 63–64 (GG), Arg85, and Asn178.

This sequence belongs to the acetylglutamate kinase family. ArgB subfamily.

It is found in the cytoplasm. It carries out the reaction N-acetyl-L-glutamate + ATP = N-acetyl-L-glutamyl 5-phosphate + ADP. The protein operates within amino-acid biosynthesis; L-arginine biosynthesis; N(2)-acetyl-L-ornithine from L-glutamate: step 2/4. In terms of biological role, catalyzes the ATP-dependent phosphorylation of N-acetyl-L-glutamate. The protein is Acetylglutamate kinase of Prochlorococcus marinus (strain AS9601).